Consider the following 184-residue polypeptide: Large ribosomal subunit protein uL18 (184 aa).

It belongs to the universal ribosomal protein uL18 family. In terms of assembly, part of the 50S ribosomal subunit. Contacts the 5S and 23S rRNAs.

In terms of biological role, this is one of the proteins that bind and probably mediate the attachment of the 5S RNA into the large ribosomal subunit, where it forms part of the central protuberance. The protein is Large ribosomal subunit protein uL18 of Natronomonas pharaonis (strain ATCC 35678 / DSM 2160 / CIP 103997 / JCM 8858 / NBRC 14720 / NCIMB 2260 / Gabara) (Halobacterium pharaonis).